The following is a 391-amino-acid chain: Processive diacylglycerol beta-glucosyltransferase (391 aa).

The protein belongs to the glycosyltransferase 28 family. UgtP subfamily.

The protein localises to the cell membrane. The catalysed reaction is a 1,2-diacyl-3-O-(beta-D-glucopyranosyl)-sn-glycerol + UDP-alpha-D-glucose = a 1,2-diacyl-3-O-(beta-D-Glc-(1-&gt;6)-beta-D-Glc)-sn-glycerol + UDP + H(+). It catalyses the reaction a 1,2-diacyl-sn-glycerol + UDP-alpha-D-glucose = a 1,2-diacyl-3-O-(beta-D-glucopyranosyl)-sn-glycerol + UDP + H(+). Its pathway is glycolipid metabolism; diglucosyl-diacylglycerol biosynthesis. Functionally, processive glucosyltransferase involved in the biosynthesis of both the bilayer- and non-bilayer-forming membrane glucolipids. Is able to successively transfer two glucosyl residues to diacylglycerol (DAG), thereby catalyzing the formation of beta-monoglucosyl-DAG (3-O-(beta-D-glucopyranosyl)-1,2-diacyl-sn-glycerol) and beta-diglucosyl-DAG (3-O-(beta-D-glucopyranosyl-beta-(1-&gt;6)-D-glucopyranosyl)-1,2-diacyl-sn-glycerol). Beta-diglucosyl-DAG is the predominant glycolipid found in Bacillales and is also used as a membrane anchor for lipoteichoic acid (LTA). The protein is Processive diacylglycerol beta-glucosyltransferase of Staphylococcus aureus (strain bovine RF122 / ET3-1).